The chain runs to 427 residues: Tol-Pal system protein TolB (427 aa).

A signal peptide spans 1–23; it reads MKLLKRLVSVFAIVLAVGSNAFA.

It belongs to the TolB family. As to quaternary structure, the Tol-Pal system is composed of five core proteins: the inner membrane proteins TolA, TolQ and TolR, the periplasmic protein TolB and the outer membrane protein Pal. They form a network linking the inner and outer membranes and the peptidoglycan layer.

It is found in the periplasm. Functionally, part of the Tol-Pal system, which plays a role in outer membrane invagination during cell division and is important for maintaining outer membrane integrity. The polypeptide is Tol-Pal system protein TolB (Haemophilus influenzae (strain 86-028NP)).